We begin with the raw amino-acid sequence, 84 residues long: Small ribosomal subunit protein uS17 (84 aa).

This sequence belongs to the universal ribosomal protein uS17 family. As to quaternary structure, part of the 30S ribosomal subunit.

In terms of biological role, one of the primary rRNA binding proteins, it binds specifically to the 5'-end of 16S ribosomal RNA. The protein is Small ribosomal subunit protein uS17 of Glaesserella parasuis serovar 5 (strain SH0165) (Haemophilus parasuis).